The chain runs to 131 residues: uncharacterized protein (131 aa).

In terms of domain architecture, CMP/dCMP-type deaminase spans 1 to 116 (MYMARMLSEM…EMLEASSIQC (116 aa)).

This is an uncharacterized protein from Caenorhabditis elegans.